The sequence spans 395 residues: Phosphopentomutase (395 aa).

Positions 12, 289, 294, 330, 331, and 342 each coordinate Mn(2+).

The protein belongs to the phosphopentomutase family. Mn(2+) is required as a cofactor.

It localises to the cytoplasm. The catalysed reaction is 2-deoxy-alpha-D-ribose 1-phosphate = 2-deoxy-D-ribose 5-phosphate. The enzyme catalyses alpha-D-ribose 1-phosphate = D-ribose 5-phosphate. Its pathway is carbohydrate degradation; 2-deoxy-D-ribose 1-phosphate degradation; D-glyceraldehyde 3-phosphate and acetaldehyde from 2-deoxy-alpha-D-ribose 1-phosphate: step 1/2. Isomerase that catalyzes the conversion of deoxy-ribose 1-phosphate (dRib-1-P) and ribose 1-phosphate (Rib-1-P) to deoxy-ribose 5-phosphate (dRib-5-P) and ribose 5-phosphate (Rib-5-P), respectively. In Levilactobacillus brevis (strain ATCC 367 / BCRC 12310 / CIP 105137 / JCM 1170 / LMG 11437 / NCIMB 947 / NCTC 947) (Lactobacillus brevis), this protein is Phosphopentomutase.